The chain runs to 519 residues: Cytochrome P450 monooxygenase AtmP (519 aa).

Residues 21 to 41 (SMLLVVTLVILFLWFIIPSPV) form a helical membrane-spanning segment. Cys-457 provides a ligand contact to heme.

Belongs to the cytochrome P450 family. It depends on heme as a cofactor.

The protein localises to the membrane. It functions in the pathway secondary metabolite biosynthesis. Cytochrome P450 monooxygenase; part of the ATM2 gene cluster that mediates the biosynthesis of aflatrem, a tremorgenic mycotoxin with acute neurotoxic effects. Synthesis of geranylgeranyl diphosphate (GGPP) by AtmG (a GGPP synthase) precedes condensation of GGPP with indole 3-glycerol phosphate, followed by epoxidation and cyclization by AtmM (a FAD-dependent monooxygenase) and AtmC (a prenyltransferase) to produce paspaline. AtmB is also essential for paspaline production, but its exact role has not been identified yet. AtmP, a cytochrome P450 monooxygenase, subsequently converts paspaline to 13-desoxypaxilline via PC-M6 by removal of the C-30 methyl group and oxidation at C-10. AtmQ, a cytochrome P450 monooxygenase, then catalyzes the oxidation of 13-desoxypaxilline, first at C-7 to produce paspalicine and then at C-13 to form paspalinine. Finally, AtmD prenylates paspalinine to form aflatrem. The chain is Cytochrome P450 monooxygenase AtmP from Aspergillus flavus.